The chain runs to 120 residues: Small ribosomal subunit protein uS13 (120 aa).

The segment at 96-120 (PCRGQRTRTNARTRKGPRKAIAGKK) is disordered.

Belongs to the universal ribosomal protein uS13 family. In terms of assembly, part of the 30S ribosomal subunit. Forms a loose heterodimer with protein S19. Forms two bridges to the 50S subunit in the 70S ribosome.

Its function is as follows. Located at the top of the head of the 30S subunit, it contacts several helices of the 16S rRNA. In the 70S ribosome it contacts the 23S rRNA (bridge B1a) and protein L5 of the 50S subunit (bridge B1b), connecting the 2 subunits; these bridges are implicated in subunit movement. Contacts the tRNAs in the A and P-sites. In Dechloromonas aromatica (strain RCB), this protein is Small ribosomal subunit protein uS13.